The chain runs to 544 residues: Chaperonin GroEL 2 (544 aa).

ATP-binding positions include 29–32 (TLGP), Lys50, 86–90 (DGTTT), Gly414, and Asp494.

The protein belongs to the chaperonin (HSP60) family. As to quaternary structure, forms a cylinder of 14 subunits composed of two heptameric rings stacked back-to-back. Interacts with the co-chaperonin GroES.

The protein localises to the cytoplasm. It catalyses the reaction ATP + H2O + a folded polypeptide = ADP + phosphate + an unfolded polypeptide.. Its function is as follows. Together with its co-chaperonin GroES, plays an essential role in assisting protein folding. The GroEL-GroES system forms a nano-cage that allows encapsulation of the non-native substrate proteins and provides a physical environment optimized to promote and accelerate protein folding. This chain is Chaperonin GroEL 2, found in Psychromonas ingrahamii (strain DSM 17664 / CCUG 51855 / 37).